Reading from the N-terminus, the 973-residue chain is Putative cell agglutination protein pfl3 (973 aa).

The signal sequence occupies residues 1-24 (MSLFPQILLRLLFLAFTLKSTSNA). N-linked (GlcNAc...) asparagine glycosylation is found at asparagine 75, asparagine 96, asparagine 147, asparagine 171, asparagine 184, asparagine 218, and asparagine 253. 18 consecutive repeat copies span residues 198 to 232 (GTIT…IPTA), 233 to 267 (GTVT…IPTA), 268 to 302 (GTRT…LPTA), 303 to 337 (GTNT…YPTA), 338 to 372 (GMVT…IPTA), 373 to 407 (GTVT…IPTA), 408 to 442 (GTRT…LPTA), 443 to 477 (GTNT…EPTA), 478 to 512 (GVVT…EPTA), 513 to 547 (GVVT…EPTA), 548 to 582 (GVVT…EPTA), 583 to 617 (GVVT…EPTA), 618 to 652 (GVVT…EPTA), 653 to 687 (GVVT…EPTA), 688 to 722 (GVVT…EPTA), 723 to 757 (GVVT…EPTA), 758 to 792 (GVVT…EPTA), and 793 to 828 (GYVT…VPSL). The 18 X 35 AA approximate tandem repeats stretch occupies residues 198 to 828 (GTITLTTISG…GTVLQVVPSL (631 aa)). Asparagine 352 and asparagine 393 each carry an N-linked (GlcNAc...) asparagine glycan. Residues 820–973 (TVLQVVPSLF…SNVYFKAVPL (154 aa)) enclose the DIPSY domain. Asparagine 848 carries an N-linked (GlcNAc...) asparagine glycan.

It belongs to the mam3/map4 family.

It localises to the cell surface. Functionally, may be involved in agglutination during conjugation or other aspects of colony formation. Induces flocculation when overexpressed. The chain is Putative cell agglutination protein pfl3 from Schizosaccharomyces pombe (strain 972 / ATCC 24843) (Fission yeast).